The primary structure comprises 774 residues: Lysyl oxidase homolog 2 (774 aa).

The signal sequence occupies residues Met1–Ala24. 4 consecutive SRCR domains span residues Leu57–Ser158, Ile187–Val301, Val325–Asn424, and Leu434–Ser543. Disulfide bonds link Cys83/Cys147, Cys96/Cys157, Cys127/Cys137, Cys217/Cys290, Cys230/Cys300, Cys264/Cys274, Cys350/Cys413, Cys363/Cys423, and Cys394/Cys404. Asn287 carries an N-linked (GlcNAc...) asparagine glycan. Residue Asn454 is glycosylated (N-linked (GlcNAc...) asparagine). 3 disulfide bridges follow: Cys463-Cys529, Cys476-Cys542, and Cys510-Cys520. A lysyl-oxidase like region spans residues Pro547–Asn751. Residues Asp548 and Leu549 each contribute to the Ca(2+) site. 4 disulfides stabilise this stretch: Cys572-Cys624, Cys578-Cys694, Cys656-Cys672, and Cys662-Cys684. Cu cation contacts are provided by His625, His627, and His629. A glycan (N-linked (GlcNAc...) asparagine) is linked at Asn643. Positions Lys652–Tyr688 form a cross-link, lysine tyrosylquinone (Lys-Tyr). Tyr688 is modified (2',4',5'-topaquinone). Ca(2+) is bound by residues Glu721, Asp723, Asn726, and Asn727.

Belongs to the lysyl oxidase family. Cu cation serves as cofactor. Requires lysine tyrosylquinone residue as cofactor. In terms of processing, the lysine tyrosylquinone cross-link (LTQ) is generated by condensation of the epsilon-amino group of a lysine with a topaquinone produced by oxidation of tyrosine.

The protein resides in the secreted. The protein localises to the extracellular space. Its subcellular location is the extracellular matrix. It localises to the basement membrane. It is found in the nucleus. The protein resides in the chromosome. The protein localises to the endoplasmic reticulum. It carries out the reaction L-lysyl-[protein] + O2 + H2O = (S)-2-amino-6-oxohexanoyl-[protein] + H2O2 + NH4(+). In terms of biological role, mediates the post-translational oxidative deamination of lysine residues on target proteins leading to the formation of deaminated lysine (allysine). Acts as a transcription corepressor and specifically mediates deamination of trimethylated 'Lys-4' of histone H3 (H3K4me3), a specific tag for epigenetic transcriptional activation. Shows no activity against histone H3 when it is trimethylated on 'Lys-9' (H3K9me3) or 'Lys-27' (H3K27me3) or when 'Lys-4' is monomethylated (H3K4me1) or dimethylated (H3K4me2). Also mediates deamination of methylated TAF10, a member of the transcription factor IID (TFIID) complex, which induces release of TAF10 from promoters, leading to inhibition of TFIID-dependent transcription. LOXL2-mediated deamination of TAF10 results in transcriptional repression of genes required for embryonic stem cell pluripotency including POU5F1/OCT4, NANOG, KLF4 and SOX2. Involved in epithelial to mesenchymal transition (EMT) via interaction with SNAI1 and participates in repression of E-cadherin CDH1, probably by mediating deamination of histone H3. During EMT, involved with SNAI1 in negatively regulating pericentromeric heterochromatin transcription. SNAI1 recruits LOXL2 to pericentromeric regions to oxidize histone H3 and repress transcription which leads to release of heterochromatin component CBX5/HP1A, enabling chromatin reorganization and acquisition of mesenchymal traits. Interacts with the endoplasmic reticulum protein HSPA5 which activates the IRE1-XBP1 pathway of the unfolded protein response, leading to expression of several transcription factors involved in EMT and subsequent EMT induction. When secreted into the extracellular matrix, promotes cross-linking of extracellular matrix proteins by mediating oxidative deamination of peptidyl lysine residues in precursors to fibrous collagen and elastin. Acts as a regulator of sprouting angiogenesis, probably via collagen IV scaffolding. Acts as a regulator of chondrocyte differentiation, probably by regulating expression of factors that control chondrocyte differentiation. This is Lysyl oxidase homolog 2 (LOXL2) from Gallus gallus (Chicken).